The sequence spans 194 residues: Fe/S biogenesis protein NfuA (194 aa).

The [4Fe-4S] cluster site is built by Cys151 and Cys154.

The protein belongs to the NfuA family. In terms of assembly, homodimer. The cofactor is [4Fe-4S] cluster.

In terms of biological role, involved in iron-sulfur cluster biogenesis. Binds a 4Fe-4S cluster, can transfer this cluster to apoproteins, and thereby intervenes in the maturation of Fe/S proteins. Could also act as a scaffold/chaperone for damaged Fe/S proteins. In Aliivibrio salmonicida (strain LFI1238) (Vibrio salmonicida (strain LFI1238)), this protein is Fe/S biogenesis protein NfuA.